The chain runs to 274 residues: Large ribosomal subunit protein uL2cz/uL2cy (274 aa).

The disordered stretch occupies residues 225-274 (PVDHPHGGGEGRAPIGRKKPVTPWGYPALGRRTRKRKKYSETLILRRRSK).

This sequence belongs to the universal ribosomal protein uL2 family. In terms of assembly, part of the 50S ribosomal subunit.

It is found in the plastid. The protein localises to the chloroplast. This is Large ribosomal subunit protein uL2cz/uL2cy (rpl2-A) from Crucihimalaya wallichii (Rock-cress).